The chain runs to 595 residues: Beta-(1--&gt;2)glucan export ATP-binding/permease protein NdvA (595 aa).

The region spanning 21–301 (SLLICAANVM…MSNFINLTVS (281 aa)) is the ABC transmembrane type-1 domain. Transmembrane regions (helical) follow at residues 22–42 (LLIC…PILF), 55–75 (IILT…AYVL), 128–148 (AIWL…FILI), 152–172 (FNMN…YVLI), and 248–268 (TAST…VAKG). The ABC transporter domain occupies 335–569 (VQFHHVTYKF…GGRFYKLLKA (235 aa)). ATP is bound at residue 368 to 375 (GPTGAGKT).

Belongs to the ABC transporter superfamily. Beta-(1--&gt;2)glucan exporter (TC 3.A.1.108.1) family. Homodimer.

The protein localises to the cell inner membrane. The catalysed reaction is [(1-&gt;2)-beta-D-glucosyl](n)(in) + ATP + H2O = [(1-&gt;2)-beta-D-glucosyl](n)(out) + ADP + phosphate + H(+). Functionally, involved in beta-(1--&gt;2)glucan export. Transmembrane domains (TMD) form a pore in the inner membrane and the ATP-binding domain (NBD) is responsible for energy generation. The protein is Beta-(1--&gt;2)glucan export ATP-binding/permease protein NdvA of Bartonella quintana (strain Toulouse) (Rochalimaea quintana).